A 293-amino-acid polypeptide reads, in one-letter code: Shikimate dehydrogenase (NADP(+)) (293 aa).

Shikimate is bound by residues Ser-20–Thr-22 and Thr-72. Lys-76 acts as the Proton acceptor in catalysis. Shikimate is bound by residues Asn-97 and Asp-112. NADP(+) is bound by residues Gly-136 to Ala-140 and Ile-230. Tyr-232 serves as a coordination point for shikimate. Gly-253 provides a ligand contact to NADP(+).

The protein belongs to the shikimate dehydrogenase family. Homodimer.

The catalysed reaction is shikimate + NADP(+) = 3-dehydroshikimate + NADPH + H(+). It participates in metabolic intermediate biosynthesis; chorismate biosynthesis; chorismate from D-erythrose 4-phosphate and phosphoenolpyruvate: step 4/7. Its function is as follows. Involved in the biosynthesis of the chorismate, which leads to the biosynthesis of aromatic amino acids. Catalyzes the reversible NADPH linked reduction of 3-dehydroshikimate (DHSA) to yield shikimate (SA). The polypeptide is Shikimate dehydrogenase (NADP(+)) (Arthrobacter sp. (strain FB24)).